A 284-amino-acid polypeptide reads, in one-letter code: Zinc finger protein ZAT3 (284 aa).

Basic and acidic residues predominate over residues 1 to 12; sequence MNNNHSYDDRSF. Positions 1 to 76 are disordered; the sequence is MNNNHSYDDR…KPDPNAPKIT (76 aa). The segment covering 18–37 has biased composition (polar residues); that stretch reads PSNTSNPNPNLQFALSSSYD. Residues 47–62 are compositionally biased toward low complexity; the sequence is TVASSSSSSPKSASKP. 3 C2H2-type zinc fingers span residues 77–99, 162–184, and 222–244; these read RPCT…MRCH, FECG…RASH, and HKCN…MRCH.

In terms of assembly, interacts (via the EAR motif) with TPL. As to expression, expressed exclusively in pollen.

Its subcellular location is the nucleus. In terms of biological role, mediates the regulation of male germ cell division by DUO1. The polypeptide is Zinc finger protein ZAT3 (Arabidopsis thaliana (Mouse-ear cress)).